The sequence spans 293 residues: Cytosolic Fe-S cluster assembly factor CFD1 (293 aa).

Residue 25-32 participates in ATP binding; it reads GKGGVGKS. [4Fe-4S] cluster is bound by residues Cys-201 and Cys-204. Residue Ser-291 is modified to Phosphoserine.

The protein belongs to the Mrp/NBP35 ATP-binding proteins family. NUBP2/CFD1 subfamily. As to quaternary structure, heterotetramer of 2 NBP35 and 2 CFD1 chains. The cofactor is [4Fe-4S] cluster.

Its subcellular location is the cytoplasm. Its function is as follows. Component of the cytosolic iron-sulfur (Fe/S) protein assembly (CIA) machinery. Required for maturation of extramitochondrial Fe-S proteins. The NBP35-CFD1 heterotetramer forms a Fe-S scaffold complex, mediating the de novo assembly of an Fe-S cluster and its transfer to target apoproteins. Nucleotide binding/hydrolysis seems to be critcal for loading of Fe-S clusters onto CFD1 and NBP35. Required for biogenesis and export of both ribosomal subunits, which may reflect a role in assembly of the Fe/S clusters in RLI1, a protein which performs rRNA processing and ribosome export. This Saccharomyces cerevisiae (strain ATCC 204508 / S288c) (Baker's yeast) protein is Cytosolic Fe-S cluster assembly factor CFD1.